A 343-amino-acid polypeptide reads, in one-letter code: Adenine deaminase (343 aa).

Positions 17, 19, and 197 each coordinate Zn(2+). The active-site Proton donor is the glutamate 200. Aspartate 278 provides a ligand contact to Zn(2+). Aspartate 279 lines the substrate pocket.

This sequence belongs to the metallo-dependent hydrolases superfamily. Adenosine and AMP deaminases family. Adenine deaminase type 2 subfamily. Zn(2+) serves as cofactor.

It catalyses the reaction adenine + H2O + H(+) = hypoxanthine + NH4(+). In terms of biological role, catalyzes the hydrolytic deamination of adenine to hypoxanthine. Plays an important role in the purine salvage pathway and in nitrogen catabolism. This is Adenine deaminase from Rhodopseudomonas palustris (strain BisB18).